A 212-amino-acid polypeptide reads, in one-letter code: Phosphatidylserine decarboxylase proenzyme (212 aa).

S182 functions as the Schiff-base intermediate with substrate; via pyruvic acid in the catalytic mechanism. S182 bears the Pyruvic acid (Ser); by autocatalysis mark.

It belongs to the phosphatidylserine decarboxylase family. PSD-A subfamily. In terms of assembly, heterodimer of a large membrane-associated beta subunit and a small pyruvoyl-containing alpha subunit. The cofactor is pyruvate. Is synthesized initially as an inactive proenzyme. Formation of the active enzyme involves a self-maturation process in which the active site pyruvoyl group is generated from an internal serine residue via an autocatalytic post-translational modification. Two non-identical subunits are generated from the proenzyme in this reaction, and the pyruvate is formed at the N-terminus of the alpha chain, which is derived from the carboxyl end of the proenzyme. The post-translation cleavage follows an unusual pathway, termed non-hydrolytic serinolysis, in which the side chain hydroxyl group of the serine supplies its oxygen atom to form the C-terminus of the beta chain, while the remainder of the serine residue undergoes an oxidative deamination to produce ammonia and the pyruvoyl prosthetic group on the alpha chain.

It localises to the cell membrane. The catalysed reaction is a 1,2-diacyl-sn-glycero-3-phospho-L-serine + H(+) = a 1,2-diacyl-sn-glycero-3-phosphoethanolamine + CO2. The protein operates within phospholipid metabolism; phosphatidylethanolamine biosynthesis; phosphatidylethanolamine from CDP-diacylglycerol: step 2/2. Catalyzes the formation of phosphatidylethanolamine (PtdEtn) from phosphatidylserine (PtdSer). The protein is Phosphatidylserine decarboxylase proenzyme of Chlorobium phaeobacteroides (strain DSM 266 / SMG 266 / 2430).